The sequence spans 189 residues: Hypoxanthine/guanine phosphoribosyltransferase (189 aa).

This sequence belongs to the purine/pyrimidine phosphoribosyltransferase family. Archaeal HPRT subfamily. As to quaternary structure, homodimer.

It localises to the cytoplasm. The catalysed reaction is IMP + diphosphate = hypoxanthine + 5-phospho-alpha-D-ribose 1-diphosphate. It carries out the reaction GMP + diphosphate = guanine + 5-phospho-alpha-D-ribose 1-diphosphate. It functions in the pathway purine metabolism; IMP biosynthesis via salvage pathway; IMP from hypoxanthine: step 1/1. Its function is as follows. Catalyzes a salvage reaction resulting in the formation of IMP that is energically less costly than de novo synthesis. This is Hypoxanthine/guanine phosphoribosyltransferase from Methanothermus fervidus (strain ATCC 43054 / DSM 2088 / JCM 10308 / V24 S).